A 607-amino-acid chain; its full sequence is Terpenoid synthase 9 (607 aa).

Residues D356, D360, N501, and D509 each coordinate Mg(2+). Positions 356 to 360 match the DDXXD motif motif; it reads DDTFD.

This sequence belongs to the terpene synthase family. Tpsa subfamily. It depends on Mg(2+) as a cofactor. Requires Mn(2+) as cofactor. As to expression, predominantly expressed in roots but also in stems, leaves and flowers.

The protein localises to the cytoplasm. Its pathway is secondary metabolite biosynthesis; terpenoid biosynthesis. Its function is as follows. Involved in terpene biosynthesis in roots. Possesses diterpene (C20) synthase activity in vitro. Does not seem to be involved in sesquiterpene (C15) biosynthesis. The chain is Terpenoid synthase 9 from Arabidopsis thaliana (Mouse-ear cress).